Here is a 428-residue protein sequence, read N- to C-terminus: Histidinol dehydrogenase (428 aa).

Residues Ser234, Gln256, and His259 each contribute to the substrate site. Zn(2+) contacts are provided by Gln256 and His259. Residues Glu323 and His324 each act as proton acceptor in the active site. Positions 324, 357, 411, and 416 each coordinate substrate. Asp357 is a binding site for Zn(2+). Residue His416 coordinates Zn(2+).

Belongs to the histidinol dehydrogenase family. It depends on Zn(2+) as a cofactor.

It catalyses the reaction L-histidinol + 2 NAD(+) + H2O = L-histidine + 2 NADH + 3 H(+). It functions in the pathway amino-acid biosynthesis; L-histidine biosynthesis; L-histidine from 5-phospho-alpha-D-ribose 1-diphosphate: step 9/9. Functionally, catalyzes the sequential NAD-dependent oxidations of L-histidinol to L-histidinaldehyde and then to L-histidine. In Campylobacter jejuni subsp. jejuni serotype O:2 (strain ATCC 700819 / NCTC 11168), this protein is Histidinol dehydrogenase.